The primary structure comprises 363 residues: Ribosomal RNA large subunit methyltransferase M (363 aa).

S-adenosyl-L-methionine contacts are provided by residues S187, 220–223, D239, D259, and D276; that span reads CPGG. The active-site Proton acceptor is K305.

This sequence belongs to the class I-like SAM-binding methyltransferase superfamily. RNA methyltransferase RlmE family. RlmM subfamily. In terms of assembly, monomer.

Its subcellular location is the cytoplasm. It catalyses the reaction cytidine(2498) in 23S rRNA + S-adenosyl-L-methionine = 2'-O-methylcytidine(2498) in 23S rRNA + S-adenosyl-L-homocysteine + H(+). Functionally, catalyzes the 2'-O-methylation at nucleotide C2498 in 23S rRNA. The polypeptide is Ribosomal RNA large subunit methyltransferase M (Shewanella loihica (strain ATCC BAA-1088 / PV-4)).